The primary structure comprises 391 residues: DNA repair protein NreB (391 aa).

Residues 3–17 (CIECRGRMLCSRKVC) form a C4-type zinc finger. Residues 384–391 (QRTLWEFM) carry the PIP motif motif.

This sequence belongs to the Nre family. Interacts with the DNA polymerase sliding clamp (PCNA) via the PIP (PCNA-interacting peptide) motif.

Its function is as follows. Involved in DNA damage repair. The sequence is that of DNA repair protein NreB from Archaeoglobus fulgidus (strain ATCC 49558 / DSM 4304 / JCM 9628 / NBRC 100126 / VC-16).